Here is a 1894-residue protein sequence, read N- to C-terminus: Adenylate kinase 9 (1894 aa).

Residues 32–286 (TCFIIFGKPG…LFMTVIERLK (255 aa)) are adenylate kinase 1. 41 to 46 (GAGKTT) provides a ligand contact to ATP. Residues 61–90 (EALSVLEEHIAAEKETGAMLQSLLVSGHSI) are NMP 1. AMP is bound at residue 117–120 (EMPS). Residues 161–206 (GQRQHSTTGYVYTREQWDPEIIESRRRKKRDFPKEGKSEEEEEEEE) are LID 1. A disordered region spans residues 188–211 (KKRDFPKEGKSEEEEEEEEQEEEE). Acidic residues predominate over residues 198 to 211 (SEEEEEEEEQEEEE). Arg-230 provides a ligand contact to AMP. A coiled-coil region spans residues 451 to 478 (IKVVQQRLLNEKQAKQQEERTLKELQVQ). The tract at residues 492 to 533 (SEELPSLENTGSKLSSLEIGQEDKSKSETTITGDQVKDVSTE) is disordered. Residues 651 to 691 (LERLQEEAQAKKREEEEIRKVKEEELRLEEEKQRLMELATK) adopt a coiled-coil conformation. Disordered regions lie at residues 710 to 789 (PYPD…LGSE) and 876 to 911 (EEEAEDYQAETEIDEEQEEEEEEEEEGEEKIKEKRR). The segment covering 715 to 736 (PDNEAEEEVEDSEIHEESEAQE) has biased composition (acidic residues). Basic and acidic residues-rich tracts occupy residues 757 to 768 (EGDHEPEAEFKP) and 777 to 789 (ETEKDPKEGLGSE). A compositionally biased stretch (acidic residues) spans 876–903 (EEEAEDYQAETEIDEEQEEEEEEEEEGE). The segment at 976–1187 (LRICLLGPHG…VAKRRAELIL (212 aa)) is adenylate kinase 2. Residue 985-990 (GSGKTV) coordinates ATP. The segment at 1005–1036 (QFDEFLQEKMLLKAERKFGPEFEDDSEEEQLV) is NMP 2. AMP contacts are provided by residues 1034 to 1036 (QLV) and 1063 to 1066 (VQLT). Residues 1108-1128 (DGFPRHPEEAQFLGERGFFPD) form an LID 2 region. Acidic residues predominate over residues 1223-1241 (EFPKDEEEMSEEDEEQEAD). Positions 1223 to 1243 (EFPKDEEEMSEEDEEQEADAT) are disordered. Positions 1395-1584 (VRIMIVGPPK…VWNEVLKDIQ (190 aa)) are adenylate kinase 3. 1404 to 1409 (KSGKTT) lines the ATP pocket. Residues 1424–1455 (SVGDALRGMLNNHPDSELSLMLNWHLHKGKTV) form an NMP 3 region. AMP contacts are provided by residues Arg-1430, 1482–1485 (GYPV), and Gln-1489. The interval 1519–1533 (LEKKTEQSMSYPLHN) is LID 3.

This sequence belongs to the adenylate kinase family. As to expression, highly expressed in the testis.

The protein resides in the cytoplasm. It localises to the nucleus. It is found in the cell projection. Its subcellular location is the cilium. The protein localises to the flagellum. It catalyses the reaction a ribonucleoside 5'-phosphate + ATP = a ribonucleoside 5'-diphosphate + ADP. The catalysed reaction is AMP + ATP = 2 ADP. The enzyme catalyses GTP + AMP = GDP + ADP. It carries out the reaction CMP + ATP = CDP + ADP. It catalyses the reaction GTP + CMP = CDP + GDP. The catalysed reaction is dAMP + ATP = dADP + ADP. The enzyme catalyses dCMP + ATP = dCDP + ADP. It carries out the reaction a ribonucleoside 5'-diphosphate + ATP = a ribonucleoside 5'-triphosphate + ADP. It catalyses the reaction CDP + ATP = CTP + ADP. The catalysed reaction is CDP + GTP = CTP + GDP. The enzyme catalyses GDP + ATP = GTP + ADP. It carries out the reaction UDP + ATP = UTP + ADP. It catalyses the reaction GTP + UDP = UTP + GDP. The catalysed reaction is dTDP + GTP = dTTP + GDP. The enzyme catalyses dCDP + ATP = dCTP + ADP. It carries out the reaction dCDP + GTP = dCTP + GDP. It catalyses the reaction dGDP + ATP = dGTP + ADP. The catalysed reaction is dTDP + ATP = dTTP + ADP. The enzyme catalyses dADP + GTP = dATP + GDP. In terms of biological role, broad-specificity nucleoside phosphate kinase involved in cellular nucleotide homeostasis by catalyzing nucleoside-phosphate interconversions. Similar to other adenylate kinases, preferentially catalyzes the phosphorylation of the nucleoside monophosphate AMP with ATP as phosphate donor to produce ADP. In vitro, can also catalyze the phosphorylation of CMP, dAMP and dCMP and use GTP as an alternate phosphate donor. Moreover, exhibits a diphosphate kinase activity, producing ATP, CTP, GTP, UTP, TTP, dATP, dCTP and dGTP from the corresponding diphosphate substrates with either ATP or GTP as phosphate donors. For this activity shows the following substrate preference CDP &gt; UDP &gt; ADP &gt; TDP. The protein is Adenylate kinase 9 of Mus musculus (Mouse).